A 98-amino-acid polypeptide reads, in one-letter code: NADH-ubiquinone oxidoreductase chain 4L (98 aa).

The next 3 membrane-spanning stretches (helical) occupy residues 1 to 21, 29 to 49, and 61 to 81; these read MSIT…GLLM, SLLC…MAIL, and IILL…LVMV.

Belongs to the complex I subunit 4L family. Core subunit of respiratory chain NADH dehydrogenase (Complex I) which is composed of 45 different subunits.

It localises to the mitochondrion inner membrane. It catalyses the reaction a ubiquinone + NADH + 5 H(+)(in) = a ubiquinol + NAD(+) + 4 H(+)(out). Core subunit of the mitochondrial membrane respiratory chain NADH dehydrogenase (Complex I) which catalyzes electron transfer from NADH through the respiratory chain, using ubiquinone as an electron acceptor. Part of the enzyme membrane arm which is embedded in the lipid bilayer and involved in proton translocation. This Mesophylla macconnelli (MacConnell's bat) protein is NADH-ubiquinone oxidoreductase chain 4L (MT-ND4L).